Consider the following 618-residue polypeptide: uncharacterized protein (618 aa).

A signal peptide spans 1–29 (MSFLVLPPEVNSALMFAGAGSGPTLAAAA). The disordered stretch occupies residues 598 to 618 (SGDNSSGGFNAGNDQSGFFDG).

This sequence belongs to the mycobacterial PPE family.

This is an uncharacterized protein from Mycobacterium tuberculosis (strain ATCC 25618 / H37Rv).